We begin with the raw amino-acid sequence, 124 residues long: UPF0235 protein (124 aa).

Residues 1–22 (MTKKGSSNSSKQQQQQQQIIIN) form a disordered region.

The protein belongs to the UPF0235 family.

This is UPF0235 protein from Dictyostelium discoideum (Social amoeba).